The chain runs to 2357 residues: Protein transport protein Sec16A (2357 aa).

2 disordered regions span residues 1 to 25 (MQPP…RSVF) and 57 to 303 (FSRQ…STFR). 2 stretches are compositionally biased toward low complexity: residues 64–76 (STPL…SSPP) and 210–227 (QMPG…PSGQ). Over residues 285–303 (HLQSGSHLANNSDPESTFR) the composition is skewed to polar residues. Phosphoserine occurs at positions 296, 314, and 331. Disordered stretches follow at residues 335–359 (NPLA…GSGC), 508–540 (APDA…ARPQ), 553–603 (KPED…TGIF), 758–828 (VQPP…NPPV), 924–987 (LLVQ…SSHQ), 1006–1038 (VNVY…PNLD), and 1059–1151 (QELV…APGP). Residues 520-536 (SVSSSYSSRSHGRLSGS) are compositionally biased toward low complexity. Serine 559, serine 569, serine 587, serine 589, and serine 592 each carry phosphoserine. Position 593 is a phosphothreonine (threonine 593). Phosphoserine is present on serine 595. Composition is skewed to polar residues over residues 766–778 (SGQQ…SAAP) and 803–825 (LQSQ…SLQN). A compositionally biased stretch (polar residues) spans 1006-1028 (VNVYNPSHSDSLASQQSVASHPR). Positions 1019–1890 (SQQSVASHPR…QQVERQIKEG (872 aa)) are required for localization to endoplasmic reticulum exit sites. Position 1069 is a phosphoserine (serine 1069). Over residues 1080–1101 (ELSNPESLPAQGQAQNSAQSPA) the composition is skewed to polar residues. Residues 1101 to 1400 (ASLVLVDAGQ…EAPLPPGSFH (300 aa)) form an interaction with MIA3 region. The interval 1102 to 1405 (SLVLVDAGQQ…PGSFHGDFAY (304 aa)) is required for endoplasmic reticulum localization. Over residues 1118–1131 (QSSSVSLVSSGSGQ) the composition is skewed to low complexity. Pro residues predominate over residues 1138 to 1151 (QPWPQPVPALAPGP). Serine 1207, serine 1229, and serine 1305 each carry phosphoserine. Residues 1215 to 1248 (YPEPERPSSRASHSSERPPPRQGYPEGYYSSKSG) form a disordered region. The segment covering 1216-1233 (PEPERPSSRASHSSERPP) has biased composition (basic and acidic residues). Over residues 1307 to 1322 (FGDRPEKRDNNWRYDP) the composition is skewed to basic and acidic residues. A disordered region spans residues 1307-1378 (FGDRPEKRDN…SLSSHSHQSQ (72 aa)). Threonine 1325 carries the phosphothreonine modification. Phosphoserine is present on residues serine 1327, serine 1347, serine 1350, serine 1356, serine 1359, serine 1362, serine 1369, serine 1573, and serine 1601. Basic and acidic residues predominate over residues 1333–1354 (DPHRDPYGEEVDRRSVHSEHSA). Positions 1356-1375 (SLHSAHSLASRRSSLSSHSH) are enriched in low complexity. The tract at residues 1434-1890 (QVSSRPTSPE…QQVERQIKEG (457 aa)) is central conserved domain (CCD); mediates interaction with RNF183, LRRK2 and SEC13. The residue at position 1907 (threonine 1907) is a Phosphothreonine. 4 positions are modified to phosphoserine: serine 1939, serine 1964, serine 2022, and serine 2042. Disordered regions lie at residues 2049–2110 (KFAN…SWFF), 2141–2181 (VNLN…PVNM), and 2226–2328 (NLFV…MPFY). At threonine 2054 the chain carries Phosphothreonine. Serine 2056, serine 2073, and serine 2083 each carry phosphoserine. Basic and acidic residues predominate over residues 2087 to 2106 (ETKRPGQAAKKETKEPKKGE). The required for interaction with SEC23A stretch occupies residues 2106–2357 (ESWFFRWLPG…IGQRKHLVLN (252 aa)). A phosphoserine mark is found at serine 2271 and serine 2291. 2 stretches are compositionally biased toward low complexity: residues 2289 to 2302 (ELSR…LSRE) and 2310 to 2324 (APGD…PSGA).

The protein belongs to the SEC16 family. As to quaternary structure, SEC16A and SEC16B are each present in multiple copies in a heteromeric complex. Interacts with SEC23A. Interacts with RNF183 and RNF152. Interacts with LRRK2 (via ROC domain). Interacts with SEC13. Interacts with RAB10. Interacts with MIA3. Interacts with GORASP2 in response to ER stress. As to expression, ubiquitous. Expressed at higher levels in the pancreas.

The protein localises to the endoplasmic reticulum membrane. Its subcellular location is the golgi apparatus membrane. It localises to the cytoplasm. The protein resides in the perinuclear region. It is found in the cytosol. The protein localises to the microsome membrane. Functionally, acts as a molecular scaffold that plays a key role in the organization of the endoplasmic reticulum exit sites (ERES), also known as transitional endoplasmic reticulum (tER). SAR1A-GTP-dependent assembly of SEC16A on the ER membrane forms an organized scaffold defining an ERES. Required for secretory cargo traffic from the endoplasmic reticulum to the Golgi apparatus. Mediates the recruitment of MIA3/TANGO to ERES. Regulates both conventional (ER/Golgi-dependent) and GORASP2-mediated unconventional (ER/Golgi-independent) trafficking of CFTR to cell membrane. Positively regulates the protein stability of E3 ubiquitin-protein ligases RNF152 and RNF183 and the ER localization of RNF183. Acts as a RAB10 effector in the regulation of insulin-induced SLC2A4/GLUT4 glucose transporter-enriched vesicles delivery to the cell membrane in adipocytes. The chain is Protein transport protein Sec16A (SEC16A) from Homo sapiens (Human).